The following is a 332-amino-acid chain: Biotin synthase (332 aa).

The Radical SAM core domain maps to 53–283 (WGKGGIHACS…VHPHSIIKFA (231 aa)). 3 residues coordinate [4Fe-4S] cluster: cysteine 71, cysteine 75, and cysteine 78. The [2Fe-2S] cluster site is built by cysteine 150, cysteine 211, and lysine 281.

This sequence belongs to the radical SAM superfamily. Biotin synthase family. In terms of assembly, homodimer. The cofactor is [4Fe-4S] cluster. [2Fe-2S] cluster is required as a cofactor.

The catalysed reaction is (4R,5S)-dethiobiotin + (sulfur carrier)-SH + 2 reduced [2Fe-2S]-[ferredoxin] + 2 S-adenosyl-L-methionine = (sulfur carrier)-H + biotin + 2 5'-deoxyadenosine + 2 L-methionine + 2 oxidized [2Fe-2S]-[ferredoxin]. It participates in cofactor biosynthesis; biotin biosynthesis; biotin from 7,8-diaminononanoate: step 2/2. Its function is as follows. Catalyzes the conversion of dethiobiotin (DTB) to biotin by the insertion of a sulfur atom into dethiobiotin via a radical-based mechanism. The chain is Biotin synthase from Chlorobium phaeovibrioides (strain DSM 265 / 1930) (Prosthecochloris vibrioformis (strain DSM 265)).